A 228-amino-acid polypeptide reads, in one-letter code: DOPA 4,5-dioxygenase (228 aa).

As to quaternary structure, homodimer. As to expression, expressed at high level in coloured cap tissue and at least 10 times lower level in the stipe.

The protein localises to the cytoplasm. Its pathway is pigment biosynthesis; betalain biosynthesis. Extradiol dioxygenase that opens up the cyclic ring of DOPA between carbons 4 and 5 thus producing an unstable seco-DOPA that rearranges non-enzymatically to betalamic acid. Can also catalyze the formation of muscaflavin (a pigment found in the hygrocybe mushrooms family and of some amanita species only) by a 2,3-extradiol cleavage of DOPA. In Amanita muscaria (Fly agaric), this protein is DOPA 4,5-dioxygenase (DODA).